The sequence spans 142 residues: MAKKITGYIKLQIPAGKANPSPPVGPALGQHGVNIMEFCKAFNAETQSLEAGMPIPVVITVYSDRSFTFVKKTPPAAFLLKKAAGIKSGSGKPNTQKVGKVTRKQLEEIVAMKKADLTAADIEAGVRTIAGSARAMGLTVEE.

Belongs to the universal ribosomal protein uL11 family. As to quaternary structure, part of the ribosomal stalk of the 50S ribosomal subunit. Interacts with L10 and the large rRNA to form the base of the stalk. L10 forms an elongated spine to which L12 dimers bind in a sequential fashion forming a multimeric L10(L12)X complex. One or more lysine residues are methylated.

Forms part of the ribosomal stalk which helps the ribosome interact with GTP-bound translation factors. The polypeptide is Large ribosomal subunit protein uL11 (Dichelobacter nodosus (strain VCS1703A)).